The sequence spans 449 residues: Adenylosuccinate lyase (449 aa).

N(6)-(1,2-dicarboxyethyl)-AMP contacts are provided by residues 9–10 (RY), 75–77 (KHD), and 102–103 (TS). The active-site Proton donor/acceptor is the histidine 150. Residue glutamine 224 coordinates N(6)-(1,2-dicarboxyethyl)-AMP. The active-site Proton donor/acceptor is the serine 275. Residues serine 276, 281-283 (KMN), and 320-324 (SSERI) each bind N(6)-(1,2-dicarboxyethyl)-AMP.

It belongs to the lyase 1 family. Adenylosuccinate lyase subfamily. In terms of assembly, homotetramer. Residues from neighboring subunits contribute catalytic and substrate-binding residues to each active site.

The catalysed reaction is N(6)-(1,2-dicarboxyethyl)-AMP = fumarate + AMP. The enzyme catalyses (2S)-2-[5-amino-1-(5-phospho-beta-D-ribosyl)imidazole-4-carboxamido]succinate = 5-amino-1-(5-phospho-beta-D-ribosyl)imidazole-4-carboxamide + fumarate. It participates in purine metabolism; AMP biosynthesis via de novo pathway; AMP from IMP: step 2/2. It functions in the pathway purine metabolism; IMP biosynthesis via de novo pathway; 5-amino-1-(5-phospho-D-ribosyl)imidazole-4-carboxamide from 5-amino-1-(5-phospho-D-ribosyl)imidazole-4-carboxylate: step 2/2. Catalyzes two reactions in de novo purine nucleotide biosynthesis. Catalyzes the breakdown of 5-aminoimidazole- (N-succinylocarboxamide) ribotide (SAICAR or 2-[5-amino-1-(5-phospho-beta-D-ribosyl)imidazole-4-carboxamido]succinate) to 5-aminoimidazole-4-carboxamide ribotide (AICAR or 5-amino-1-(5-phospho-beta-D-ribosyl)imidazole-4-carboxamide) and fumarate, and of adenylosuccinate (ADS or N(6)-(1,2-dicarboxyethyl)-AMP) to adenosine monophosphate (AMP) and fumarate. This Methanothermobacter thermautotrophicus (strain ATCC 29096 / DSM 1053 / JCM 10044 / NBRC 100330 / Delta H) (Methanobacterium thermoautotrophicum) protein is Adenylosuccinate lyase (purB).